The following is a 698-amino-acid chain: Polyribonucleotide nucleotidyltransferase (698 aa).

Mg(2+)-binding residues include aspartate 490 and aspartate 496. In terms of domain architecture, KH spans 557-616; the sequence is PKVVTMTIKPDKIRDVIGPGGKKINEIIDETGVKLDIEQDGTIFIGAVDQAMINRAREII. One can recognise an S1 motif domain in the interval 626-694; that stretch reads GQTYQATVKR…KQGRVNASHR (69 aa).

The protein belongs to the polyribonucleotide nucleotidyltransferase family. Mg(2+) is required as a cofactor.

It is found in the cytoplasm. The enzyme catalyses RNA(n+1) + phosphate = RNA(n) + a ribonucleoside 5'-diphosphate. In terms of biological role, involved in mRNA degradation. Catalyzes the phosphorolysis of single-stranded polyribonucleotides processively in the 3'- to 5'-direction. The chain is Polyribonucleotide nucleotidyltransferase from Staphylococcus aureus (strain Mu3 / ATCC 700698).